Reading from the N-terminus, the 484-residue chain is N-succinylglutamate 5-semialdehyde dehydrogenase (484 aa).

221–226 (GSAAAG) serves as a coordination point for NAD(+). Catalysis depends on residues glutamate 244 and cysteine 278.

This sequence belongs to the aldehyde dehydrogenase family. AstD subfamily.

It catalyses the reaction N-succinyl-L-glutamate 5-semialdehyde + NAD(+) + H2O = N-succinyl-L-glutamate + NADH + 2 H(+). It functions in the pathway amino-acid degradation; L-arginine degradation via AST pathway; L-glutamate and succinate from L-arginine: step 4/5. Functionally, catalyzes the NAD-dependent reduction of succinylglutamate semialdehyde into succinylglutamate. This Caulobacter sp. (strain K31) protein is N-succinylglutamate 5-semialdehyde dehydrogenase.